Consider the following 296-residue polypeptide: 33 kDa chaperonin (296 aa).

2 cysteine pairs are disulfide-bonded: Cys233/Cys235 and Cys267/Cys270.

It belongs to the HSP33 family. In terms of processing, under oxidizing conditions two disulfide bonds are formed involving the reactive cysteines. Under reducing conditions zinc is bound to the reactive cysteines and the protein is inactive.

The protein localises to the cytoplasm. In terms of biological role, redox regulated molecular chaperone. Protects both thermally unfolding and oxidatively damaged proteins from irreversible aggregation. Plays an important role in the bacterial defense system toward oxidative stress. This is 33 kDa chaperonin from Actinobacillus pleuropneumoniae serotype 7 (strain AP76).